The primary structure comprises 204 residues: FMN-dependent NADH:quinone oxidoreductase (204 aa).

Residues Ser-10 and Ser-16 to Ser-18 contribute to the FMN site.

This sequence belongs to the azoreductase type 1 family. Homodimer. FMN is required as a cofactor.

The enzyme catalyses 2 a quinone + NADH + H(+) = 2 a 1,4-benzosemiquinone + NAD(+). It carries out the reaction N,N-dimethyl-1,4-phenylenediamine + anthranilate + 2 NAD(+) = 2-(4-dimethylaminophenyl)diazenylbenzoate + 2 NADH + 2 H(+). Functionally, quinone reductase that provides resistance to thiol-specific stress caused by electrophilic quinones. Also exhibits azoreductase activity. Catalyzes the reductive cleavage of the azo bond in aromatic azo compounds to the corresponding amines. In Ruegeria pomeroyi (strain ATCC 700808 / DSM 15171 / DSS-3) (Silicibacter pomeroyi), this protein is FMN-dependent NADH:quinone oxidoreductase.